Here is a 238-residue protein sequence, read N- to C-terminus: Epoxyqueuosine reductase QueH (238 aa).

[4Fe-4S] cluster contacts are provided by cysteine 43, cysteine 44, cysteine 129, and cysteine 132. Cysteines 211 and 213 form a disulfide.

It belongs to the QueH family.

The enzyme catalyses epoxyqueuosine(34) in tRNA + AH2 = queuosine(34) in tRNA + A + H2O. Its pathway is tRNA modification; tRNA-queuosine biosynthesis. Functionally, catalyzes the conversion of epoxyqueuosine (oQ) to queuosine (Q), which is a hypermodified base found in the wobble positions of tRNA(Asp), tRNA(Asn), tRNA(His) and tRNA(Tyr). The sequence is that of Epoxyqueuosine reductase QueH from Staphylococcus epidermidis (strain ATCC 12228 / FDA PCI 1200).